We begin with the raw amino-acid sequence, 356 residues long: Septin-12 (356 aa).

Residues 1–23 form a disordered region; the sequence is MDERRTPSPCSSRPSSPRTPPCE. Residues 7-16 show a composition bias toward low complexity; the sequence is PSPCSSRPSS. Residues 44-315 enclose the Septin-type G domain; that stretch reads TGFEFNIMVV…ENYRVLRLNE (272 aa). Positions 44–317 are interaction with SEPTIN7; the sequence is TGFEFNIMVV…YRVLRLNESH (274 aa). The G1 motif stretch occupies residues 54–61; it reads GQSGLGKS. GTP is bound by residues 54 to 61, Thr87, Gly113, 193 to 201, Gly249, and Arg264; these read GQSGLGKS and RADSLTIEE. The G3 motif stretch occupies residues 110 to 113; it reads DTPG. The tract at residues 192–195 is G4 motif; the sequence is ARAD. The segment at 256–356 is self-association (via N-terminus) to polymerize octameric septin 12-7-6-2/4-2/4-6-7-12 filaments; the sequence is VNGRCVLGRK…RSKDPRDDEC (101 aa). Residues 330–356 form a disordered region; sequence PASPGQLMAPGPEKVRKRSKDPRDDEC.

Belongs to the TRAFAC class TrmE-Era-EngA-EngB-Septin-like GTPase superfamily. Septin GTPase family. As to quaternary structure, septins polymerize into heterooligomeric protein complexes that form filaments, and can associate with cellular membranes, actin filaments and microtubules. GTPase activity is required for filament formation. Interacts with SEPTIN6 and SEPTIN11. Self-associates. Component of a octameric complex consisting of SEPTIN12, SEPTIN7, SEPTIN6 and SEPTIN2 or SEPTIN4 in the order 12-7-6-2-2-6-7-12 or 12-7-6-4-4-6-7-12 and located in the sperm annulus; the octamer polymerizes into filaments via the SEPTIN12 N- and C-termini; the SEPTIN12:SEPTIN7 association is mediated by the GTP-binding domains. Interacts with SPAG4 and LMNB1. Associates with alpha- and beta-tubulins. In terms of tissue distribution, predominantly expressed in testis and epididymis. Component of the sperm tail annulus (at protein level).

It localises to the cytoplasm. The protein resides in the cytoskeleton. It is found in the spindle. Its subcellular location is the cell projection. The protein localises to the cilium. It localises to the flagellum. Functionally, filament-forming cytoskeletal GTPase. May play a role in cytokinesis (Potential). Involved in spermatogenesis. Involved in the morphogenesis of sperm heads and the elongation of sperm tails probably implicating the association with alpha- and beta-tubulins. Forms a filamentous structure with SEPTIN7, SEPTIN6, SEPTIN2 and probably SEPTIN4 at the sperm annulus which is required for the structural integrity and motility of the sperm tail during postmeiotic differentiation. The protein is Septin-12 of Rattus norvegicus (Rat).